The primary structure comprises 262 residues: Small ribosomal subunit protein eS1z (262 aa).

Residues Met1–Lys18 are compositionally biased toward basic residues. The interval Met1 to Val21 is disordered.

It belongs to the eukaryotic ribosomal protein eS1 family. As to quaternary structure, component of the small ribosomal subunit. Mature ribosomes consist of a small (40S) and a large (60S) subunit. The 40S subunit contains about 33 different proteins and 1 molecule of RNA (18S). The 60S subunit contains about 49 different proteins and 3 molecules of RNA (25S, 5.8S and 5S).

It is found in the cytoplasm. The sequence is that of Small ribosomal subunit protein eS1z from Arabidopsis thaliana (Mouse-ear cress).